Here is a 351-residue protein sequence, read N- to C-terminus: MKNVLLGRSAAELEDWAVAQGHKSFRGRQIHDWLYNKGVKSLSEISALPKQWRTELEAQTFRVGRLKLVHQSVAADATTKLLLATDDGETIETVGIPTDQRLTVCISSQVGCPMACRFCATGKSGLQRSLATHEIVDQVLSVREAMDRRPSHVVFMGMGEPLLNSEAVLETIRCLNTDLGIGQRRITVSTVGVPKTLPQLAELAMEKLGRAQFTLAVSLHAPNQQLREELIPTAHAYPYDDLLDDCRHYLDLTGRRVSFEYILLGELNDHPEHAAELADRVGGFQSHVNLIAYNPIEEEEFKRPTSQRIEAFRRVLERRGVAVSLRASRGLDQNAACGQLRRQHLTGSDLT.

Glu92 functions as the Proton acceptor in the catalytic mechanism. Positions 98–332 constitute a Radical SAM core domain; that stretch reads TDQRLTVCIS…VSLRASRGLD (235 aa). Cys105 and Cys337 are oxidised to a cystine. Cys112, Cys116, and Cys119 together coordinate [4Fe-4S] cluster. Residues 159 to 160, Ser189, 218 to 220, and Asn294 contribute to the S-adenosyl-L-methionine site; these read GE and SLH. Catalysis depends on Cys337, which acts as the S-methylcysteine intermediate.

The protein belongs to the radical SAM superfamily. RlmN family. [4Fe-4S] cluster serves as cofactor.

It is found in the cytoplasm. The catalysed reaction is adenosine(2503) in 23S rRNA + 2 reduced [2Fe-2S]-[ferredoxin] + 2 S-adenosyl-L-methionine = 2-methyladenosine(2503) in 23S rRNA + 5'-deoxyadenosine + L-methionine + 2 oxidized [2Fe-2S]-[ferredoxin] + S-adenosyl-L-homocysteine. It carries out the reaction adenosine(37) in tRNA + 2 reduced [2Fe-2S]-[ferredoxin] + 2 S-adenosyl-L-methionine = 2-methyladenosine(37) in tRNA + 5'-deoxyadenosine + L-methionine + 2 oxidized [2Fe-2S]-[ferredoxin] + S-adenosyl-L-homocysteine. Functionally, specifically methylates position 2 of adenine 2503 in 23S rRNA and position 2 of adenine 37 in tRNAs. This is Probable dual-specificity RNA methyltransferase RlmN from Synechococcus sp. (strain CC9902).